The sequence spans 270 residues: Putative phosphoenolpyruvate synthase regulatory protein (270 aa).

150-157 (GVSRCGKT) contributes to the ADP binding site.

Belongs to the pyruvate, phosphate/water dikinase regulatory protein family. PSRP subfamily.

The enzyme catalyses [pyruvate, water dikinase] + ADP = [pyruvate, water dikinase]-phosphate + AMP + H(+). It catalyses the reaction [pyruvate, water dikinase]-phosphate + phosphate + H(+) = [pyruvate, water dikinase] + diphosphate. In terms of biological role, bifunctional serine/threonine kinase and phosphorylase involved in the regulation of the phosphoenolpyruvate synthase (PEPS) by catalyzing its phosphorylation/dephosphorylation. The chain is Putative phosphoenolpyruvate synthase regulatory protein from Shewanella baltica (strain OS223).